We begin with the raw amino-acid sequence, 129 residues long: Follitropin subunit beta (129 aa).

The first 18 residues, 1 to 18 (MKTVQFCFLFCCWKAICC), serve as a signal peptide directing secretion. Disulfide bonds link C21–C69, C35–C84, C38–C122, C46–C100, C50–C102, and C105–C112. N25 and N42 each carry an N-linked (GlcNAc...) asparagine glycan.

The protein belongs to the glycoprotein hormones subunit beta family. In terms of assembly, heterodimer. The active follitropin is a heterodimer composed of an alpha chain/CGA shared with other hormones and a unique beta chain/FSHB shown here.

Its subcellular location is the secreted. Together with the alpha chain CGA constitutes follitropin, the follicle-stimulating hormone, and provides its biological specificity to the hormone heterodimer. Binds FSHR, a G protein-coupled receptor, on target cells to activate downstream signaling pathways. Follitropin is involved in follicle development and spermatogenesis in reproductive organs. This is Follitropin subunit beta (FSHB) from Macaca fascicularis (Crab-eating macaque).